We begin with the raw amino-acid sequence, 292 residues long: Probable alpha-L-glutamate ligase (292 aa).

The region spanning 104-287 (HQLLAAKGID…VATRIIEHVE (184 aa)) is the ATP-grasp domain. Residues K141, 178–179 (EF), D187, and 211–213 (RSN) each bind ATP. 3 residues coordinate Mg(2+): D248, E260, and N262. Positions 248, 260, and 262 each coordinate Mn(2+).

This sequence belongs to the RimK family. Mg(2+) serves as cofactor. It depends on Mn(2+) as a cofactor.

The polypeptide is Probable alpha-L-glutamate ligase (Stenotrophomonas maltophilia (strain K279a)).